We begin with the raw amino-acid sequence, 196 residues long: Holliday junction branch migration complex subunit RuvA (196 aa).

A domain I region spans residues 1 to 63 (MINKIYGKII…EDEIKLFGFL (63 aa)). The domain II stretch occupies residues 64 to 138 (NVSEREVFEE…GKLVKADELT (75 aa)). T138 is a region of interest (flexible linker). The interval 139–196 (SSVFKFKDLEQSIVNMGFDRKLVVAAIKEIMLIDEFLMLREVEQEQFLFRETLKRLSG) is domain III.

The protein belongs to the RuvA family. As to quaternary structure, homotetramer. Forms an RuvA(8)-RuvB(12)-Holliday junction (HJ) complex. HJ DNA is sandwiched between 2 RuvA tetramers; dsDNA enters through RuvA and exits via RuvB. An RuvB hexamer assembles on each DNA strand where it exits the tetramer. Each RuvB hexamer is contacted by two RuvA subunits (via domain III) on 2 adjacent RuvB subunits; this complex drives branch migration. In the full resolvosome a probable DNA-RuvA(4)-RuvB(12)-RuvC(2) complex forms which resolves the HJ.

It localises to the cytoplasm. The RuvA-RuvB-RuvC complex processes Holliday junction (HJ) DNA during genetic recombination and DNA repair, while the RuvA-RuvB complex plays an important role in the rescue of blocked DNA replication forks via replication fork reversal (RFR). RuvA specifically binds to HJ cruciform DNA, conferring on it an open structure. The RuvB hexamer acts as an ATP-dependent pump, pulling dsDNA into and through the RuvAB complex. HJ branch migration allows RuvC to scan DNA until it finds its consensus sequence, where it cleaves and resolves the cruciform DNA. The sequence is that of Holliday junction branch migration complex subunit RuvA from Borrelia hermsii (strain HS1 / DAH).